Reading from the N-terminus, the 299-residue chain is uncharacterized protein (299 aa).

The disordered stretch occupies residues 1-44 (MSDSNLTNPIKAFFHDEFPEQYQEPPGLQKNMKPVPDCGEKSYK). Residue 55-79 (LVTGGDSGIGRAAAIAYAREGADVA) coordinates NADP(+). Ser-188 is a substrate binding site. Tyr-201 serves as the catalytic Proton acceptor.

It belongs to the short-chain dehydrogenases/reductases (SDR) family.

This is an uncharacterized protein from Bacillus subtilis (strain 168).